Consider the following 231-residue polypeptide: Probable pseudouridine-5'-phosphatase (231 aa).

Catalysis depends on Asp15, which acts as the Nucleophile. The Mg(2+) site is built by Asp15 and Asp17. The Proton donor role is filled by Asp17.

Belongs to the HAD-like hydrolase superfamily. CbbY/CbbZ/Gph/YieH family. Mg(2+) is required as a cofactor.

It catalyses the reaction psi-UMP + H2O = pseudouridine + phosphate. Functionally, dephosphorylates pseudouridine 5'-phosphate, a potential intermediate in rRNA degradation. This Drosophila melanogaster (Fruit fly) protein is Probable pseudouridine-5'-phosphatase (Gs1l).